A 453-amino-acid chain; its full sequence is Glutamyl-tRNA(Gln) amidotransferase subunit A (453 aa).

Catalysis depends on charge relay system residues Lys56 and Ser131. Ser155 functions as the Acyl-ester intermediate in the catalytic mechanism.

It belongs to the amidase family. GatA subfamily. In terms of assembly, heterotrimer of A, B and C subunits.

The catalysed reaction is L-glutamyl-tRNA(Gln) + L-glutamine + ATP + H2O = L-glutaminyl-tRNA(Gln) + L-glutamate + ADP + phosphate + H(+). Allows the formation of correctly charged Gln-tRNA(Gln) through the transamidation of misacylated Glu-tRNA(Gln) in organisms which lack glutaminyl-tRNA synthetase. The reaction takes place in the presence of glutamine and ATP through an activated gamma-phospho-Glu-tRNA(Gln). The protein is Glutamyl-tRNA(Gln) amidotransferase subunit A of Campylobacter jejuni subsp. jejuni serotype O:6 (strain 81116 / NCTC 11828).